The sequence spans 403 residues: 4-hydroxy-3-methylbut-2-en-1-yl diphosphate synthase (ferredoxin) (403 aa).

4 residues coordinate [4Fe-4S] cluster: cysteine 312, cysteine 315, cysteine 346, and glutamate 353.

The protein belongs to the IspG family. [4Fe-4S] cluster is required as a cofactor.

The enzyme catalyses (2E)-4-hydroxy-3-methylbut-2-enyl diphosphate + 2 oxidized [2Fe-2S]-[ferredoxin] + H2O = 2-C-methyl-D-erythritol 2,4-cyclic diphosphate + 2 reduced [2Fe-2S]-[ferredoxin] + H(+). The protein operates within isoprenoid biosynthesis; isopentenyl diphosphate biosynthesis via DXP pathway; isopentenyl diphosphate from 1-deoxy-D-xylulose 5-phosphate: step 5/6. Functionally, converts 2C-methyl-D-erythritol 2,4-cyclodiphosphate (ME-2,4cPP) into 1-hydroxy-2-methyl-2-(E)-butenyl 4-diphosphate. The polypeptide is 4-hydroxy-3-methylbut-2-en-1-yl diphosphate synthase (ferredoxin) (Synechocystis sp. (strain ATCC 27184 / PCC 6803 / Kazusa)).